The primary structure comprises 442 residues: Cell division protein FtsA (442 aa).

It belongs to the FtsA/MreB family. In terms of assembly, self-interacts. Interacts with FtsZ.

It is found in the cell inner membrane. In terms of biological role, cell division protein that is involved in the assembly of the Z ring. May serve as a membrane anchor for the Z ring. The chain is Cell division protein FtsA from Rhizobium meliloti (strain 1021) (Ensifer meliloti).